A 390-amino-acid polypeptide reads, in one-letter code: Tuftelin (390 aa).

Coiled-coil stretches lie at residues 88-126 (DKMT…KLDR) and 163-352 (PSMS…EKQV). The disordered stretch occupies residues 356–383 (NFSTQARAKTENLGSVRISKPPSPKPMP).

The protein belongs to the tuftelin family. As to quaternary structure, interacts with TFIP11. May form oligomers. In terms of tissue distribution, ameloblasts, and also non-odontogenic tissues including kidney, lung, liver and testis.

The protein localises to the secreted. Its function is as follows. Involved in the structural organization of the epidermis. Involved in the mineralization and structural organization of enamel. This chain is Tuftelin (Tuft1), found in Mus musculus (Mouse).